The chain runs to 387 residues: Calcium sensing receptor, chloroplastic (387 aa).

The N-terminal 33 residues, 1 to 33 (MAMAEMATKSSLSAKLTLPSSSTKKTLSLRQVS), are a transit peptide targeting the chloroplast. The Lumenal, thylakoid portion of the chain corresponds to 34 to 186 (VSLPTSTSIS…TMDTISSADP (153 aa)). Residues 187 to 207 (SVIVVAAGAAFLAYLLLPPVF) form a helical membrane-spanning segment. The Stromal segment spans residues 208 to 387 (SAISFNFRGY…SGTKFLPSSD (180 aa)). In terms of domain architecture, Rhodanese spans 231-352 (CTKNYLMVDI…WLQSRLGTDS (122 aa)). The residue at position 380 (Thr380) is a Phosphothreonine.

In terms of processing, phosphorylation seems to be light-dependent. As to expression, predominantly expressed in the shoot, including guard cells.

It localises to the plastid. Its subcellular location is the chloroplast thylakoid membrane. Modulates cytoplasmic Ca(2+) concentration and is crucial for proper stomatal regulation in response to elevated levels of external Ca(2+). May function by regulating concentrations of inositol 1,4,5-trisphosphate (IP3), which in turn triggers release of Ca(2+) from internal stores. May play a role in de-etiolation. The sequence is that of Calcium sensing receptor, chloroplastic (CAS) from Arabidopsis thaliana (Mouse-ear cress).